A 345-amino-acid polypeptide reads, in one-letter code: Arginase (345 aa).

Over residues 1-16 the composition is skewed to basic and acidic residues; the sequence is MKETAAAKFERQHMDS. Positions 1–34 are disordered; sequence MKETAAAKFERQHMDSPDLGTDDDDKMSPATSPF. 6 residues coordinate Mn(2+): I101, H124, S126, G128, I232, and C234.

This sequence belongs to the arginase family. In terms of assembly, homotrimer. It depends on Mn(2+) as a cofactor.

It catalyses the reaction L-arginine + H2O = urea + L-ornithine. The protein operates within nitrogen metabolism; urea cycle; L-ornithine and urea from L-arginine: step 1/1. With respect to regulation, the enzyme activity is increased in the range of 20-50% upon the addition of Mn(2+) (1 mM), Co(2+) (1 mM), Ni(2+) (1 and 5 mM) and K(+) (5 mM). In contrast, the addition of Cu(2+), Zn(2+), Ca(2+), Mg(2+), Fe(2+) (both 1 and 5 mM), and Co(2+) (5 mM) strongly suppresses the arginase activity. SDS (1%) and EDTA (1 mM) are the most potent inhibitors. Reducing agents DTT (1 mM), PMSF (1 mM) and beta-mercaptoethanol (1 mM) also significantly inhibit activity by 85%, 64% and 35%, respectively. Surfactants Triton X-100 (1%), Tween-80 (1%) and Tween-20 (1%) are more tolerant, showing a slight decrease of arginase activity in the range of 10-30%. Cold-active L-arginase that catalyzes the hydrolysis of L-arginine to L-ornithine and urea, an essential reaction in the urea cycle for toxic ammonia removal and cell proliferation. Is not able to use D-arginine or L-canavanine as substrates. The sequence is that of Arginase from Glaciozyma antarctica (strain PI12) (Antarctic psychrophilic yeast).